The following is an 87-amino-acid chain: Retinal rod rhodopsin-sensitive cGMP 3',5'-cyclic phosphodiesterase subunit gamma (87 aa).

Residue methionine 1 is modified to N-acetylmethionine. Over residues 1–12 (MNLEPPKAEIRS) the composition is skewed to basic and acidic residues. Positions 1-55 (MNLEPPKAEIRSATRVIGGPVTPRKGPPKFKQRQTRQFKSKPPKKGVQGFGDDIP) are disordered. Basic residues predominate over residues 26–44 (GPPKFKQRQTRQFKSKPPK).

This sequence belongs to the rod/cone cGMP-PDE gamma subunit family. In terms of assembly, oligomer composed of two catalytic chains (alpha and beta), an inhibitory chain (gamma) and the delta chain.

It catalyses the reaction 3',5'-cyclic GMP + H2O = GMP + H(+). Functionally, participates in processes of transmission and amplification of the visual signal. cGMP-PDEs are the effector molecules in G-protein-mediated phototransduction in vertebrate rods and cones. The sequence is that of Retinal rod rhodopsin-sensitive cGMP 3',5'-cyclic phosphodiesterase subunit gamma (PDE6G) from Canis lupus familiaris (Dog).